Reading from the N-terminus, the 148-residue chain is Large ribosomal subunit protein bL9 (148 aa).

This sequence belongs to the bacterial ribosomal protein bL9 family.

Binds to the 23S rRNA. The sequence is that of Large ribosomal subunit protein bL9 from Bacillus mycoides (strain KBAB4) (Bacillus weihenstephanensis).